A 240-amino-acid chain; its full sequence is Tetraspanin-1 (240 aa).

The Cytoplasmic segment spans residues 1–9 (MQCFSFIKT). Residues 10–30 (IMILFNLLIFLCGAALLAVGI) traverse the membrane as a helical segment. At 31-52 (WVSIDGASFLKIFGPLSSSAMQ) the chain is on the extracellular side. The helical transmembrane segment at 53 to 73 (FVNVGYFLIAAGAVVFALGFL) threads the bilayer. Residues 74–88 (GCYGAQTESKCALMT) are Cytoplasmic-facing. Residues 89-109 (FFFILLLIFIAEVAAAVVALV) form a helical membrane-spanning segment. Topologically, residues 110–210 (YTTMAEHFLT…QQLLYDIRTN (101 aa)) are extracellular. N-linked (GlcNAc...) asparagine glycosylation is present at N154. A helical transmembrane segment spans residues 211-231 (AVTVGGVAAGIGGLELAAMIV). Residues 232-240 (SMYLYCNLQ) lie on the Cytoplasmic side of the membrane.

Belongs to the tetraspanin (TM4SF) family. As to quaternary structure, interacts with SLC19A2. Interacts with NTRK1/TRKA.

Its subcellular location is the lysosome membrane. Its function is as follows. Structural component of specialized membrane microdomains known as tetraspanin-enriched microdomains (TERMs), which act as platforms for receptor clustering and signaling. Participates thereby in diverse biological functions such as cell signal transduction, adhesion, migration and protein trafficking. Regulates neuronal differentiation in response to NGF by facilitating NGF-mediated activation of NTRK1/TRKA receptor tyrosine kinase and subsequent downstream signaling pathways. Plays a role in the inhibition of TNFalpha-induced apoptosis. Mechanistically, inhibits the NF-kappa-B signaling pathway by blocking phosphorylation of CHUK. Also promotes the stability of the thiamine transporter 1/SLC19A2 in intestinal epithelial cells leading to an increase of thiamine uptake process. The sequence is that of Tetraspanin-1 (TSPAN1) from Macaca fascicularis (Crab-eating macaque).